Reading from the N-terminus, the 150-residue chain is SsrA-binding protein (150 aa).

The protein belongs to the SmpB family.

The protein resides in the cytoplasm. Required for rescue of stalled ribosomes mediated by trans-translation. Binds to transfer-messenger RNA (tmRNA), required for stable association of tmRNA with ribosomes. tmRNA and SmpB together mimic tRNA shape, replacing the anticodon stem-loop with SmpB. tmRNA is encoded by the ssrA gene; the 2 termini fold to resemble tRNA(Ala) and it encodes a 'tag peptide', a short internal open reading frame. During trans-translation Ala-aminoacylated tmRNA acts like a tRNA, entering the A-site of stalled ribosomes, displacing the stalled mRNA. The ribosome then switches to translate the ORF on the tmRNA; the nascent peptide is terminated with the 'tag peptide' encoded by the tmRNA and targeted for degradation. The ribosome is freed to recommence translation, which seems to be the essential function of trans-translation. The protein is SsrA-binding protein of Thermotoga maritima (strain ATCC 43589 / DSM 3109 / JCM 10099 / NBRC 100826 / MSB8).